Reading from the N-terminus, the 309-residue chain is Taste receptor type 2 member 20 (309 aa).

The Extracellular segment spans residues 1–6 (MMSFLH). Residues 7–27 (IVFSILVVVAFILGNFANGFI) form a helical membrane-spanning segment. The Cytoplasmic portion of the chain corresponds to 28 to 46 (ALINFIAWVKRQKISSADQ). Residues 47-67 (IIAALAVSRVGLLWVILLHWY) form a helical membrane-spanning segment. Residues 68–79 (STVLNPTSSNLK) lie on the Extracellular side of the membrane. Residues 80 to 100 (VTIFISNAWAVTNHFSIWLAA) form a helical membrane-spanning segment. The Cytoplasmic segment spans residues 101-125 (SLSIFYLLKIVNFSRLIFHHLKRKA). Residues 126–146 (KSVVLVIVLGSLFFLVCHLVM) traverse the membrane as a helical segment. Residues 147–178 (KSTYINVWTEEYEGNVTWKIKLRNAMHLSNLT) lie on the Extracellular side of the membrane. N-linked (GlcNAc...) asparagine glycosylation is found at asparagine 161 and asparagine 176. Residues 179–199 (VAMLANLIPFTLTLISFLLLI) form a helical membrane-spanning segment. Topologically, residues 200-229 (YSLCKHLKKMQLHGKGSQDPSTKIHIKALQ) are cytoplasmic. A helical transmembrane segment spans residues 230–250 (TVTSFLILLAIYFLCLITSFW). The Extracellular portion of the chain corresponds to 251–259 (NSKMRPKEI). A helical membrane pass occupies residues 260–280 (VLMLCQAFGIIYPSFHSFILI). Topologically, residues 281–309 (WGNKTLKQTFLSVLWRVTCWAKGQNQSTP) are cytoplasmic.

The protein belongs to the G-protein coupled receptor T2R family.

The protein resides in the membrane. Functionally, receptor that may play a role in the perception of bitterness and is gustducin-linked. May play a role in sensing the chemical composition of the gastrointestinal content. The activity of this receptor may stimulate alpha gustducin, mediate PLC-beta-2 activation and lead to the gating of TRPM5. This chain is Taste receptor type 2 member 20 (TAS2R20), found in Gorilla gorilla gorilla (Western lowland gorilla).